The sequence spans 257 residues: Ribosome-inactivating protein charybdin (257 aa).

The active site involves Glu167. Cys217 and Cys254 are oxidised to a cystine.

This sequence belongs to the ribosome-inactivating protein family. Type 1 RIP subfamily.

The catalysed reaction is Endohydrolysis of the N-glycosidic bond at one specific adenosine on the 28S rRNA.. Inhibits translation in rabbit reticulocytes. The protein is Ribosome-inactivating protein charybdin of Drimia maritima (Sea squill).